The primary structure comprises 220 residues: Peptide methionine sulfoxide reductase MsrA (220 aa).

Cys59 is a catalytic residue.

Belongs to the MsrA Met sulfoxide reductase family.

It catalyses the reaction L-methionyl-[protein] + [thioredoxin]-disulfide + H2O = L-methionyl-(S)-S-oxide-[protein] + [thioredoxin]-dithiol. It carries out the reaction [thioredoxin]-disulfide + L-methionine + H2O = L-methionine (S)-S-oxide + [thioredoxin]-dithiol. Functionally, has an important function as a repair enzyme for proteins that have been inactivated by oxidation. Catalyzes the reversible oxidation-reduction of methionine sulfoxide in proteins to methionine. This is Peptide methionine sulfoxide reductase MsrA from Corynebacterium kroppenstedtii (strain DSM 44385 / JCM 11950 / CIP 105744 / CCUG 35717).